An 83-amino-acid chain; its full sequence is Small ribosomal subunit protein bS16 (83 aa).

It belongs to the bacterial ribosomal protein bS16 family.

The sequence is that of Small ribosomal subunit protein bS16 from Acidovorax ebreus (strain TPSY) (Diaphorobacter sp. (strain TPSY)).